A 631-amino-acid polypeptide reads, in one-letter code: Pescadillo homolog (631 aa).

The region spanning 321–414 (RLRTLFKGLK…QLLPTNDYFL (94 aa)) is the BRCT domain. Basic and acidic residues predominate over residues 428–442 (SKRDSYIPPEEKALH). Disordered stretches follow at residues 428–471 (SKRD…EADQ), 489–561 (YKKY…VDEH), and 602–631 (ADNK…KLVK). Residues Ser453 and Ser457 each carry the phosphoserine modification. 2 stretches are compositionally biased toward acidic residues: residues 453 to 471 (SEEE…EADQ) and 498 to 525 (VNED…EDVD). Residues 526–538 (EQTKRKQQEKEKM) show a composition bias toward basic and acidic residues. Residues 544–553 (KVHKVNKRQV) show a composition bias toward basic residues. The stretch at 591 to 631 (WLLRKKRRNIDADNKEAKKAAKREARKQAAEAAARAAKLVK) forms a coiled coil. Basic and acidic residues predominate over residues 602 to 619 (ADNKEAKKAAKREARKQA). Positions 620 to 631 (AEAAARAAKLVK) are enriched in low complexity.

The protein belongs to the pescadillo family.

Its subcellular location is the nucleus. The protein localises to the nucleolus. The protein resides in the nucleoplasm. Required for maturation of ribosomal RNAs and formation of the large ribosomal subunit. In Drosophila pseudoobscura pseudoobscura (Fruit fly), this protein is Pescadillo homolog.